We begin with the raw amino-acid sequence, 259 residues long: Dihydroorotate dehydrogenase B (NAD(+)), electron transfer subunit (259 aa).

The 101-residue stretch at 2–102 folds into the FAD-binding FR-type domain; the sequence is MQKQNMIVVN…LGPLGHGFPV (101 aa). FAD-binding positions include 53 to 56, 70 to 72, and 77 to 78; these read RPIS, LYR, and GT. 4 residues coordinate [2Fe-2S] cluster: cysteine 221, cysteine 226, cysteine 229, and cysteine 246.

It belongs to the PyrK family. As to quaternary structure, heterotetramer of 2 PyrK and 2 PyrD type B subunits. The cofactor is [2Fe-2S] cluster. FAD is required as a cofactor.

Its pathway is pyrimidine metabolism; UMP biosynthesis via de novo pathway; orotate from (S)-dihydroorotate (NAD(+) route): step 1/1. Its function is as follows. Responsible for channeling the electrons from the oxidation of dihydroorotate from the FMN redox center in the PyrD type B subunit to the ultimate electron acceptor NAD(+). The sequence is that of Dihydroorotate dehydrogenase B (NAD(+)), electron transfer subunit from Bacillus cereus (strain ZK / E33L).